The sequence spans 394 residues: 8-amino-7-oxononanoate synthase (394 aa).

Arginine 18 contributes to the substrate binding site. 105–106 (GY) provides a ligand contact to pyridoxal 5'-phosphate. Residue histidine 130 participates in substrate binding. Serine 175, histidine 203, and threonine 232 together coordinate pyridoxal 5'-phosphate. Lysine 235 carries the post-translational modification N6-(pyridoxal phosphate)lysine. Threonine 349 serves as a coordination point for substrate.

The protein belongs to the class-II pyridoxal-phosphate-dependent aminotransferase family. BioF subfamily. As to quaternary structure, homodimer. Requires pyridoxal 5'-phosphate as cofactor.

It catalyses the reaction 6-carboxyhexanoyl-[ACP] + L-alanine + H(+) = (8S)-8-amino-7-oxononanoate + holo-[ACP] + CO2. It participates in cofactor biosynthesis; biotin biosynthesis. In terms of biological role, catalyzes the decarboxylative condensation of pimeloyl-[acyl-carrier protein] and L-alanine to produce 8-amino-7-oxononanoate (AON), [acyl-carrier protein], and carbon dioxide. This Marinobacter nauticus (strain ATCC 700491 / DSM 11845 / VT8) (Marinobacter aquaeolei) protein is 8-amino-7-oxononanoate synthase.